The primary structure comprises 236 residues: MGRAFEFRKGRKMKRWSAMAKAFTRIGKDIVMAVKEGGPNPEANSRLRAVIQNSKAVNMPKENVERAIKKATDKDTANYKEILFEGYAPHGIAILIETASDNNNRTVANIRSYFNKCNGTMGTQGSVEFMFDHTCNFRIPANGMDPEELELELIDFGAEEVFEDEDGILIYAPFGSFGTIQKELETRGIEILSSGFERIPQITKELTEAQIADVEKLIEKIEEDEDVMNVYHTMQE.

The protein belongs to the TACO1 family.

The protein resides in the cytoplasm. The sequence is that of Probable transcriptional regulatory protein FP0835 from Flavobacterium psychrophilum (strain ATCC 49511 / DSM 21280 / CIP 103535 / JIP02/86).